The sequence spans 115 residues: MKFVLLFGVFLVTLFSYSSAEMLDDFDQADEDELLSLIEKEEARAKECTPRFYDCSHDRHSCCRSELFKDVCTCFYPEGGDNEVCTCQRPKHLKYMEKAADKAKKFGGKIKKWFG.

The signal sequence occupies residues 1–20 (MKFVLLFGVFLVTLFSYSSA). Positions 21–44 (EMLDDFDQADEDELLSLIEKEEAR) are excised as a propeptide. 4 disulfide bridges follow: Cys-48–Cys-63, Cys-55–Cys-72, Cys-62–Cys-87, and Cys-74–Cys-85.

It belongs to the neurotoxin 19 (CSTX) family. 01 subfamily. Expressed by the venom gland.

The protein localises to the secreted. The chain is U3-lycotoxin-Ls1g from Lycosa singoriensis (Wolf spider).